We begin with the raw amino-acid sequence, 393 residues long: HORMA domain-containing protein 1 (393 aa).

One can recognise an HORMA domain in the interval 24-226; it reads QQSLVLVKRL…TPFHTFKVKV (203 aa). The interval 322–393 is disordered; that stretch reads SKTSELDVSE…RKFSEPKERI (72 aa). Basic and acidic residues predominate over residues 352-361; sequence KSKENRKRTQ. Serine 375 is modified (phosphoserine). The Nuclear localization signal signature appears at 382–385; the sequence is KRRK.

In terms of assembly, interacts with HORMAD2. Interacts with IHO1. Phosphorylated at Ser-376 in a SPO11-dependent manner.

It is found in the nucleus. The protein resides in the chromosome. In terms of biological role, plays a key role in meiotic progression. Regulates 3 different functions during meiosis: ensures that sufficient numbers of processed DNA double-strand breaks (DSBs) are available for successful homology search by increasing the steady-state numbers of single-stranded DSB ends. Promotes synaptonemal-complex formation independently of its role in homology search. Plays a key role in the male mid-pachytene checkpoint and the female meiotic prophase checkpoint: required for efficient build-up of ATR activity on unsynapsed chromosome regions, a process believed to form the basis of meiotic silencing of unsynapsed chromatin (MSUC) and meiotic prophase quality control in both sexes. This chain is HORMA domain-containing protein 1 (HORMAD1), found in Bos taurus (Bovine).